The sequence spans 515 residues: Transcription termination factor Rho (515 aa).

The region spanning 146 to 221 (DVLFTGVLDV…VKIKSINDQD (76 aa)) is the Rho RNA-BD domain. ATP contacts are provided by residues 264-269 (GKGQRA), 276-281 (KAGKTT), and arginine 307.

This sequence belongs to the Rho family. As to quaternary structure, homohexamer. The homohexamer assembles into an open ring structure.

Its function is as follows. Facilitates transcription termination by a mechanism that involves Rho binding to the nascent RNA, activation of Rho's RNA-dependent ATPase activity, and release of the mRNA from the DNA template. This is Transcription termination factor Rho from Borreliella burgdorferi (strain ATCC 35210 / DSM 4680 / CIP 102532 / B31) (Borrelia burgdorferi).